Reading from the N-terminus, the 737-residue chain is MDDDKPFQPKNISKMAELFMECEEEELEPWQKKVEETQDEDDDELIFVGEISSSKPAISNILNRGHSSSSSKGIKSEPHSPGIPEIFRTASQRCRDPPSNPVAASPRFHLVSKSSQSSVTVENASKPDFTKNSQVGSDNSSILLFDSTQESLPPSQDIPAIFREGMKNTSYVLKHPSTSKVNSVTPKKPKTSEDVPQINPSTSLPLIGSPPVTSSQVMLSKGTNTSSPYDAGADYLRACPKCNVQFNLLDPLKYHMKHCCPDMITKFLGVIVKSERPCDEDKTDSETGKLIMLVNEFYYGRHEGVTEKEPKTYTTFKCFSCSKVLKNNIRFMNHMKHHLELEKQNNESWENHTTCQHCYRQYPTPFQLQCHIESTHTPHEFSTICKICELSFETEHILLQHMKDTHKPGEMPYVCQVCQFRSSTFSDVEAHFRAAHENTKNLLCPFCLKVSKMATPYMNHYMKHQKKGVHRCPKCRLQFLTSKEKAEHKAQHRTFIKPKELEGLPPGAKVTIRASLGPLQSKLPTAPFGCAPGTSFLQVTPPTSQNTTARNPRKSNASRSKTSKLHATTSTASKVNTSKPRGRIAKSKAKPSYKQKRQRNRKNKMSLALKNIRCRRGIHKCIECHSKIKDFASHFSIYIHCSFCKYNTNCNKAFVNHMMSSHSNHPGKRFCIFKKHSGTLRGITLVCLKCDFLADSSGLDRMAKHLSQRKTHTCQVIIENVSKSTSTSEPTTGCSLK.

Glycyl lysine isopeptide (Lys-Gly) (interchain with G-Cter in SUMO2) cross-links involve residues Lys-5, Lys-10, Lys-14, Lys-33, and Lys-55. Positions 57–66 are enriched in polar residues; it reads AISNILNRGH. Residues 57-137 form a disordered region; sequence AISNILNRGH…DFTKNSQVGS (81 aa). Residue Lys-75 forms a Glycyl lysine isopeptide (Lys-Gly) (interchain with G-Cter in SUMO2) linkage. Ser-80 carries the phosphoserine modification. The span at 112 to 123 shows a compositional bias: polar residues; sequence SKSSQSSVTVEN. Residues Lys-113, Lys-126, Lys-167, Lys-174, Lys-180, and Lys-187 each participate in a glycyl lysine isopeptide (Lys-Gly) (interchain with G-Cter in SUMO2) cross-link. The segment covering 176 to 185 has biased composition (polar residues); sequence PSTSKVNSVT. The segment at 176–223 is disordered; the sequence is PSTSKVNSVTPKKPKTSEDVPQINPSTSLPLIGSPPVTSSQVMLSKGT. Polar residues predominate over residues 211–223; sequence PVTSSQVMLSKGT. Thr-223 carries the phosphothreonine modification. At Ser-227 the chain carries Phosphoserine. A Glycyl lysine isopeptide (Lys-Gly) (interchain with G-Cter in SUMO2) cross-link involves residue Lys-273. 5 C2H2-type zinc fingers span residues 316–338, 353–376, 383–406, 413–436, and 470–492; these read FKCF…MKHH, TTCQ…ESTH, TICK…KDTH, YVCQ…RAAH, and HRCP…KAQH. Lys-522 participates in a covalent cross-link: Glycyl lysine isopeptide (Lys-Gly) (interchain with G-Cter in SUMO2). The segment covering 535–579 has biased composition (polar residues); sequence SFLQVTPPTSQNTTARNPRKSNASRSKTSKLHATTSTASKVNTSK. A disordered region spans residues 535–602; that stretch reads SFLQVTPPTS…YKQKRQRNRK (68 aa). At Thr-540 the chain carries Phosphothreonine. Glycyl lysine isopeptide (Lys-Gly) (interchain with G-Cter in SUMO2) cross-links involve residues Lys-564 and Lys-574. The span at 580-602 shows a compositional bias: basic residues; the sequence is PRGRIAKSKAKPSYKQKRQRNRK.

The protein resides in the nucleus. In terms of biological role, may function as a transcription factor. This Homo sapiens (Human) protein is Zinc finger protein 280C (ZNF280C).